We begin with the raw amino-acid sequence, 163 residues long: Nucleotide-binding protein MS1759 (163 aa).

This sequence belongs to the YajQ family.

Its function is as follows. Nucleotide-binding protein. The protein is Nucleotide-binding protein MS1759 of Mannheimia succiniciproducens (strain KCTC 0769BP / MBEL55E).